The following is a 241-amino-acid chain: Ribose-5-phosphate isomerase A (241 aa).

Substrate contacts are provided by residues 29–32 (TGTT), 84–87 (DGAD), and 97–100 (KGGG). Residue E106 is the Proton acceptor of the active site. K124 lines the substrate pocket.

This sequence belongs to the ribose 5-phosphate isomerase family. Homodimer.

The catalysed reaction is aldehydo-D-ribose 5-phosphate = D-ribulose 5-phosphate. Its pathway is carbohydrate degradation; pentose phosphate pathway; D-ribose 5-phosphate from D-ribulose 5-phosphate (non-oxidative stage): step 1/1. Catalyzes the reversible conversion of ribose-5-phosphate to ribulose 5-phosphate. The chain is Ribose-5-phosphate isomerase A from Thermoplasma volcanium (strain ATCC 51530 / DSM 4299 / JCM 9571 / NBRC 15438 / GSS1).